Consider the following 62-residue polypeptide: Phylloseptin-Az7 (62 aa).

A signal peptide spans 1–19 (LKKSLFLVLFLGLVSLSIC). Positions 20–40 (EEEKRETEEKENEQEDDKSEE) are excised as a propeptide. Phe-61 carries the post-translational modification Phenylalanine amide.

It belongs to the frog skin active peptide (FSAP) family. Phylloseptin subfamily. In terms of tissue distribution, expressed by the skin glands.

Its subcellular location is the secreted. Its function is as follows. Has antimicrobial activity. This is Phylloseptin-Az7 (psn15) from Pithecopus azureus (Orange-legged monkey tree frog).